Consider the following 400-residue polypeptide: Phosphoglycerate kinase (400 aa).

Substrate contacts are provided by residues aspartate 24 to asparagine 26, arginine 40, histidine 63 to arginine 66, arginine 121, and arginine 154. ATP-binding positions include lysine 205, glycine 296, glutamate 327, and glycine 356–serine 359.

As to quaternary structure, monomer.

The protein resides in the cytoplasm. It carries out the reaction (2R)-3-phosphoglycerate + ATP = (2R)-3-phospho-glyceroyl phosphate + ADP. Its pathway is carbohydrate degradation; glycolysis; pyruvate from D-glyceraldehyde 3-phosphate: step 2/5. This Nostoc sp. (strain PCC 7120 / SAG 25.82 / UTEX 2576) protein is Phosphoglycerate kinase.